A 316-amino-acid polypeptide reads, in one-letter code: Glutathione synthetase (316 aa).

The ATP-grasp domain occupies 123–309 (NEKISTLSFK…ISGILLDSIE (187 aa)). 149–206 (FQEKFGDIILKPINKMGGDSVFYVKKNDPNVSVIIDQLTNYGNSFCLIQEYIKEILNG) lines the ATP pocket. Glu280 and Asn282 together coordinate Mg(2+).

The protein belongs to the prokaryotic GSH synthase family. The cofactor is Mg(2+). Mn(2+) serves as cofactor.

The catalysed reaction is gamma-L-glutamyl-L-cysteine + glycine + ATP = glutathione + ADP + phosphate + H(+). It participates in sulfur metabolism; glutathione biosynthesis; glutathione from L-cysteine and L-glutamate: step 2/2. The sequence is that of Glutathione synthetase from Wigglesworthia glossinidia brevipalpis.